Consider the following 314-residue polypeptide: O-antigen chain rhamnosyltransferase RfbN (314 aa).

The protein belongs to the glycosyltransferase 2 family.

The enzyme catalyses alpha-D-galactosyl-di-trans,octa-cis-undecaprenyl diphosphate + dTDP-beta-L-rhamnose = alpha-L-rhamnosyl-(1-&gt;3)-alpha-D-galactosyl-1-diphospho-di-trans,octa-cis-undecaprenol + dTDP + H(+). Its pathway is bacterial outer membrane biogenesis; LPS O-antigen biosynthesis. In terms of biological role, rhamnosyltransferase involved in the biosynthesis of the repeat unit of the lipopolysaccharide (LPS) O-antigen region. Catalyzes the addition of a rhamnose to the galactosyl-undecaprenyl diphosphate intermediate. The chain is O-antigen chain rhamnosyltransferase RfbN from Salmonella typhimurium (strain LT2 / SGSC1412 / ATCC 700720).